The primary structure comprises 363 residues: Methyltransferase pynC (363 aa).

S-adenosyl-L-methionine-binding positions include 199–200 (GG), D225, 254–255 (SF), R270, and R271.

Belongs to the class I-like SAM-binding methyltransferase superfamily. Cation-independent O-methyltransferase family.

It participates in secondary metabolite biosynthesis. Its function is as follows. Methyltransferase; part of the gene cluster that mediates the biosynthesis of pyranonigrins, a family of antioxidative compounds. The first step of pyranonigrins biosynthesis is performed by the hybrid PKS-NRPS synthetase that condenses 6 malonyl-CoA units to an acetyl starter unit, to form a 1,3,5-trioxotetradecane-6,8-dienyl-ACP. The enoyl reductase (ER) domain of pynA is likely to be functional during the first two rounds of polyketide chain extension, to generate the saturated C-C bonds of the alkyl side chain. PynA subsequently forms the amide bond between the acyl chain and L-serine. Although pynA has a terminal reductase domain, it appears to require the thioesterase pynI for the release of the straight-chain intermediate from pynA via the formation of a tetramic acid pyranonigrin J. The methyltransferase pynC then coverts pyranonigrin J to pyranonigrin I via N-methylation. The FAD-dependent monooxygenase pynG catalyzes an epoxidation-mediated cyclization to form the dihydro-gamma-pyrone moiety, followed by pynD-catalyzed oxidation of the alcohol to the ketone and enolization to yield the characteristic tetramic acid-fused gamma-pyrone core of pyranonigrin H. Pyranonigrin H is substrate of pynH for dehydration-mediated exo-methylene formation from the serine side chain to produce pyranonigrin E, before the oxidase pynE reduces the exo-methylene of pyranonigrin E into a pendant methyl to form pyranonigrin G. The FAD-linked oxidoreductase pynB performs the reverse reaction and converts pyranonigrin G back to pyranonigrin E. The chain is Methyltransferase pynC from Aspergillus niger (strain ATCC MYA-4892 / CBS 513.88 / FGSC A1513).